A 307-amino-acid polypeptide reads, in one-letter code: MmsAB operon regulatory protein (307 aa).

The region spanning Asp-201–Arg-299 is the HTH araC/xylS-type domain. 2 DNA-binding regions (H-T-H motif) span residues Glu-218 to Thr-239 and Val-266 to Met-289.

Functionally, regulatory protein for the mmsAB operon. Activates the transcription of the mmsAB genes. In Pseudomonas aeruginosa (strain ATCC 15692 / DSM 22644 / CIP 104116 / JCM 14847 / LMG 12228 / 1C / PRS 101 / PAO1), this protein is MmsAB operon regulatory protein.